A 433-amino-acid chain; its full sequence is Type I acyl-CoA thioesterase mpaH (433 aa).

The interval His58–Asp246 is abhydrolase domain. Val60 lines the substrate pocket. Ser139 (nucleophile) is an active-site residue. Phe140 contributes to the substrate binding site. Catalysis depends on residues Asp163 and His365.

This sequence belongs to the AB hydrolase superfamily. MpaH hydrolase family. In terms of assembly, homodimer.

It localises to the peroxisome matrix. It carries out the reaction mycophenolyl-CoA + H2O = mycophenolate + CoA + H(+). Its pathway is secondary metabolite biosynthesis; terpenoid biosynthesis. Its function is as follows. Type I acyl-CoA thioesterase; part of the gene cluster that mediates the biosynthesis of mycophenolic acid (MPA), the first isolated antibiotic natural product in the world obtained from a culture of Penicillium brevicompactum in 1893. MpaH acts as a peroxisomal acyl-CoA hydrolase that converts MPA-CoA into the final product MPA. The first step of the pathway is the synthesis of 5-methylorsellinic acid (5MOA) by the cytosolic polyketide synthase mpaC. 5MOA is then converted to the phthalide compound 5,7-dihydroxy-4,6-dimethylphthalide (DHMP) by the endoplasmic reticulum-bound cytochrome P450 monooxygenase mpaDE. MpaDE first catalyzes hydroxylation of 5-MOA to 4,6-dihydroxy-2-(hydroxymethyl)-3-methylbenzoic acid (DHMB). MpaDE then acts as a lactone synthase that catalyzes the ring closure to convert DHMB into DHMP. The next step is the prenylation of DHMP by the Golgi apparatus-associated prenyltransferase mpaA to yield farnesyl-DHMP (FDHMP). The ER-bound oxygenase mpaB then mediates the oxidative cleavage the C19-C20 double bond in FDHMP to yield FDHMP-3C via a mycophenolic aldehyde intermediate. The O-methyltransferase mpaG catalyzes the methylation of FDHMP-3C to yield MFDHMP-3C. After the cytosolic methylation of FDHMP-3C, MFDHMP-3C enters into peroxisomes probably via free diffusion due to its low molecular weight. Upon a peroxisomal CoA ligation reaction, catalyzed by a beta-oxidation component enzyme acyl-CoA ligase ACL891, MFDHMP-3C-CoA would then be restricted to peroxisomes for the following beta-oxidation pathway steps. The peroxisomal beta-oxidation machinery than converts MFDHMP-3C-CoA into MPA_CoA, via a beta-oxidation chain-shortening process. Finally mpaH acts as a peroxisomal acyl-CoA hydrolase with high substrate specificity toward MPA-CoA to release the final product MPA. The protein is Type I acyl-CoA thioesterase mpaH of Penicillium brevicompactum.